The sequence spans 544 residues: Chaperonin GroEL (544 aa).

ATP contacts are provided by residues 29-32 (TLGP), 86-90 (DGTTT), glycine 413, 476-478 (NAL), and aspartate 492.

This sequence belongs to the chaperonin (HSP60) family. Forms a cylinder of 14 subunits composed of two heptameric rings stacked back-to-back. Interacts with the co-chaperonin GroES.

It localises to the cytoplasm. It carries out the reaction ATP + H2O + a folded polypeptide = ADP + phosphate + an unfolded polypeptide.. Functionally, together with its co-chaperonin GroES, plays an essential role in assisting protein folding. The GroEL-GroES system forms a nano-cage that allows encapsulation of the non-native substrate proteins and provides a physical environment optimized to promote and accelerate protein folding. This Desulfitobacterium hafniense (strain Y51) protein is Chaperonin GroEL.